Consider the following 63-residue polypeptide: Large ribosomal subunit protein uL29 (63 aa).

Belongs to the universal ribosomal protein uL29 family.

The polypeptide is Large ribosomal subunit protein uL29 (Serratia proteamaculans (strain 568)).